The primary structure comprises 441 residues: Amino-acid acetyltransferase (441 aa).

The region spanning Glu-295–Ser-434 is the N-acetyltransferase domain.

This sequence belongs to the acetyltransferase family. ArgA subfamily.

The protein localises to the cytoplasm. The catalysed reaction is L-glutamate + acetyl-CoA = N-acetyl-L-glutamate + CoA + H(+). Its pathway is amino-acid biosynthesis; L-arginine biosynthesis; N(2)-acetyl-L-ornithine from L-glutamate: step 1/4. The sequence is that of Amino-acid acetyltransferase from Photobacterium profundum (strain SS9).